A 160-amino-acid chain; its full sequence is Ribosomal RNA large subunit methyltransferase H (160 aa).

Residues Leu76 and Gly108 each coordinate S-adenosyl-L-methionine.

It belongs to the RNA methyltransferase RlmH family. As to quaternary structure, homodimer.

It is found in the cytoplasm. The enzyme catalyses pseudouridine(1915) in 23S rRNA + S-adenosyl-L-methionine = N(3)-methylpseudouridine(1915) in 23S rRNA + S-adenosyl-L-homocysteine + H(+). Its function is as follows. Specifically methylates the pseudouridine at position 1915 (m3Psi1915) in 23S rRNA. In Bradyrhizobium diazoefficiens (strain JCM 10833 / BCRC 13528 / IAM 13628 / NBRC 14792 / USDA 110), this protein is Ribosomal RNA large subunit methyltransferase H.